Here is a 125-residue protein sequence, read N- to C-terminus: Apoptosis inhibitor Rv3655c (125 aa).

The N-terminal stretch at 1–33 (MEAALAIATLVLVLVLCLAGVTAVSMQVRCIDA) is a signal peptide.

Interacts with human E3 ubiquitin-protein ligase RNF213.

It localises to the secreted. It is found in the host cytoplasm. Functionally, effector protein that participates in the suppression of macrophage apoptosis by blocking the extrinsic pathway. Interferes with caspase-8 activation and binds to the host E3 ubiquitin-protein ligase RNF213, whose fusion partners have anti-apoptotic function. The sequence is that of Apoptosis inhibitor Rv3655c from Mycobacterium tuberculosis (strain ATCC 25618 / H37Rv).